The primary structure comprises 252 residues: Homeobox protein EMX2 (252 aa).

The segment at residues 154 to 213 (PKRIRTAFSPSQLLRLEHAFEKNHYVVGAERKQLAHSLSLTETQVKVWFQNRRTKFKRQK) is a DNA-binding region (homeobox). The tract at residues 212–252 (QKLEEEGSDSQQKKKGTHHINRWRIATKQASPEEIDVTSDD) is disordered. A compositionally biased stretch (basic residues) spans 224–233 (KKKGTHHINR).

This sequence belongs to the EMX homeobox family. Interacts with translation initiation factor EIF4E. As to expression, cerebral cortex.

It is found in the nucleus. It localises to the cell projection. The protein localises to the axon. Functionally, transcription factor, which in cooperation with EMX1, acts to generate the boundary between the roof and archipallium in the developing brain. May function in combination with OTX1/2 to specify cell fates in the developing central nervous system. In the inner ear, it controls the distribution of GPR156 at hair cell boundaries, and regulates the organization of stereociliary bundles in opposite orientations across the line of polarity reversal (LPR). The polypeptide is Homeobox protein EMX2 (EMX2) (Homo sapiens (Human)).